Reading from the N-terminus, the 164-residue chain is Ecotin (164 aa).

Positions 1-20 are cleaved as a signal peptide; the sequence is MKMFVPAVVFAALASASAWA. Cys-72 and Cys-109 are joined by a disulfide.

Belongs to the protease inhibitor I11 (ecotin) family. As to quaternary structure, homodimer.

The protein resides in the periplasm. General inhibitor of pancreatic serine proteases: inhibits chymotrypsin, trypsin, elastases, factor X, kallikrein as well as a variety of other proteases. This is Ecotin from Salmonella typhi.